The following is a 106-amino-acid chain: Ferredoxin-2 (106 aa).

2 consecutive 4Fe-4S ferredoxin-type domains span residues 2 to 29 and 30 to 59; these read YVVTENCIKCKYQDCVEVCPVDCFYEGE and NFLVINPDECIDCGVCNPECPAEAIAGKWL. The [3Fe-4S] cluster site is built by Cys8 and Cys16. [4Fe-4S] cluster-binding residues include Cys20, Cys39, Cys42, and Cys45. A [3Fe-4S] cluster-binding site is contributed by Cys49. The disordered stretch occupies residues 80 to 106; that stretch reads ADADDWKDKPDKTGLLSENPGKGTVCH.

The cofactor is [4Fe-4S] cluster. It depends on [3Fe-4S] cluster as a cofactor.

In terms of biological role, ferredoxins are iron-sulfur proteins that transfer electrons in a wide variety of metabolic reactions. The protein is Ferredoxin-2 of Rhodospirillum rubrum.